The primary structure comprises 370 residues: L-lysine 4-hydroxylase (370 aa).

Fe cation contacts are provided by His-176, Glu-178, and His-310.

Belongs to the clavaminate synthase family. Requires Fe(2+) as cofactor.

The catalysed reaction is L-lysine + 2-oxoglutarate + O2 = (4R)-4-hydroxy-L-lysine + succinate + CO2. Alpha-ketoglutarate-dependent dioxygenase that in vitro catalyzes the regio- and stereoselective hydroxylation of L-lysine, leading to (4R)-4-hydroxy-L-lysine. To a lesser extent, can also use (3S)-3-hydroxy-L-lysine as substrate, producing the dihydroxylated product (3R,4R)-3,4-hydroxy-L-lysine. Cannot use D-lysine or L-ornithine as substrate. This is L-lysine 4-hydroxylase from Flavobacterium johnsoniae (strain ATCC 17061 / DSM 2064 / JCM 8514 / BCRC 14874 / CCUG 350202 / NBRC 14942 / NCIMB 11054 / UW101) (Cytophaga johnsonae).